Here is a 497-residue protein sequence, read N- to C-terminus: GTPase-activating protein GYP8 (497 aa).

The Rab-GAP TBC domain occupies 69–281 (FVNNSLRKDC…QIFDMTISMQ (213 aa)).

This is GTPase-activating protein GYP8 (GYP8) from Saccharomyces cerevisiae (strain ATCC 204508 / S288c) (Baker's yeast).